The primary structure comprises 501 residues: Cytochrome P450 monooxygenase ccsG (501 aa).

An N-terminal signal peptide occupies residues 1 to 28; that stretch reads MMITLFTLAVVSIGFFLWWLLTVQPAVT. N-linked (GlcNAc...) asparagine glycans are attached at residues N115 and N154. C443 contributes to the heme binding site.

Belongs to the cytochrome P450 family. It depends on heme as a cofactor.

The protein operates within mycotoxin biosynthesis. In terms of biological role, cytochrome P450 monooxygenase; part of the gene cluster that mediates the biosynthesis of a family of the mycotoxins cytochalasins E and K. The hybrid PKS-NRPS synthetase ccsA and the enoyl reductase ccsC are responsible for fusion of phenylalanine with an octaketide backbone and subsequent release of the stable tetramic acid precursor. The polyketide synthase module (PKS) of the PKS-NRPS ccsA is responsible for the synthesis of the octaketide backbone. The downstream nonribosomal peptide synthetase (NRPS) amidates the carboxyl end of the octaketide with a phenylalanine. A reductase-like domain (R) at the C-terminus catalyzes the reductive release of the polyketide-amino acid intermediate. Because ccsA lacks a designated enoylreductase (ER) domain, the required activity is provided the enoyl reductase ccsC. Upon formation of the 11-membered carbocycle-fused perhydroisoindolone intermediate, a number of oxidative steps are required to afford the final cytochalasin E and K, including two hydroxylations at C17 and C18, one alcohol oxidation at C17, one epoxidation at C6 and C7 and two Baeyer-Villiger oxidations. The oxidative modification at C17, C18 and the C6-C7 epoxidation are likely to be catalyzed by the two cytochrome P450 oxygenases ccsD and ccsG. CcsD may be responsible for the epoxidation of the C6-C7 double bond. CcsG may be responsible for the successive oxidative modifications at C17 and C18. The double Baeyer-Villiger oxidations of ketocytochalasin to precytochalasin and cytochalasin Z(16) are among the final steps leading to cytochalasin E and K and are catalyzed by ccsB. The first oxygen insertion step follows that of the classic BVMO mechanism, generating the ester precytochalasin. Release of precytochalasin into an aqueous environment can generate the shunt product iso-precytochalasin through spontaneous isomerization. Alternatively, precytochalasin can undergo further oxidation by ccsB to yield the in-line carbonate-containing cytochalasin Z(16). Cytochalasin Z(16) is a precursor to cytochalasin E and cytochalasin K, whereas iso-precytochalasin is a precursor to cytochalasin Z(17) and rosellichalasin. The hydrolyase ccsE may catalyze hydrolysis of epoxide bond in cytochalasin E to afford cytochalasin K. The function of ccsF has not been assigned but it may play a role in post-PKS-NRPS biosynthetic step, resistance or transport of cytochalasins and related PKS-NRPS products. In Aspergillus clavatus (strain ATCC 1007 / CBS 513.65 / DSM 816 / NCTC 3887 / NRRL 1 / QM 1276 / 107), this protein is Cytochrome P450 monooxygenase ccsG.